Here is a 272-residue protein sequence, read N- to C-terminus: Shikimate dehydrogenase (NADP(+)) (272 aa).

Residues Ser-14–Ser-16 and Thr-61 each bind shikimate. Residue Lys-65 is the Proton acceptor of the active site. Residue Asp-102 participates in shikimate binding. NADP(+) contacts are provided by residues Gly-127–Ala-131, Asn-151–Lys-156, and Leu-215. Residue Tyr-217 participates in shikimate binding. Gly-239 serves as a coordination point for NADP(+).

Belongs to the shikimate dehydrogenase family. As to quaternary structure, homodimer.

The enzyme catalyses shikimate + NADP(+) = 3-dehydroshikimate + NADPH + H(+). It functions in the pathway metabolic intermediate biosynthesis; chorismate biosynthesis; chorismate from D-erythrose 4-phosphate and phosphoenolpyruvate: step 4/7. Its function is as follows. Involved in the biosynthesis of the chorismate, which leads to the biosynthesis of aromatic amino acids. Catalyzes the reversible NADPH linked reduction of 3-dehydroshikimate (DHSA) to yield shikimate (SA). The polypeptide is Shikimate dehydrogenase (NADP(+)) (Coxiella burnetii (strain CbuK_Q154) (Coxiella burnetii (strain Q154))).